A 293-amino-acid chain; its full sequence is Small ribosomal subunit biogenesis GTPase RsgA (293 aa).

One can recognise a CP-type G domain in the interval 63-223 (KNQLNRPPIA…VADTPGFSSL (161 aa)). GTP contacts are provided by residues 112 to 115 (SKTD) and 166 to 174 (GQSGVGKSS). Zn(2+) contacts are provided by C247, C252, H254, and C260.

This sequence belongs to the TRAFAC class YlqF/YawG GTPase family. RsgA subfamily. As to quaternary structure, monomer. Associates with 30S ribosomal subunit, binds 16S rRNA. The cofactor is Zn(2+).

Its subcellular location is the cytoplasm. Functionally, one of several proteins that assist in the late maturation steps of the functional core of the 30S ribosomal subunit. Helps release RbfA from mature subunits. May play a role in the assembly of ribosomal proteins into the subunit. Circularly permuted GTPase that catalyzes slow GTP hydrolysis, GTPase activity is stimulated by the 30S ribosomal subunit. The protein is Small ribosomal subunit biogenesis GTPase RsgA of Shouchella clausii (strain KSM-K16) (Alkalihalobacillus clausii).